Consider the following 398-residue polypeptide: DNA-directed RNA polymerase III subunit RPC4 (398 aa).

The disordered stretch occupies residues 1 to 149 (MSEGNAAGEP…IKKEKRETDE (149 aa)). At Ser-2 the chain carries N-acetylserine. Ser-42 is modified (phosphoserine). Basic and acidic residues-rich tracts occupy residues 66 to 100 (KIKE…RGRP), 116 to 128 (MMKK…KTVD), and 140 to 149 (IKKEKRETDE). Glycyl lysine isopeptide (Lys-Gly) (interchain with G-Cter in SUMO2) cross-links involve residues Lys-68 and Lys-78. Omega-N-methylarginine is present on residues Arg-95, Arg-97, and Arg-99. Glycyl lysine isopeptide (Lys-Gly) (interchain with G-Cter in SUMO2) cross-links involve residues Lys-141, Lys-152, Lys-160, Lys-190, Lys-199, Lys-206, Lys-220, Lys-285, Lys-302, and Lys-396. A disordered region spans residues 191-244 (EESEEPEAKPFSAGPKEEDMEVDVPAVKVKEEPRDEEEEAKVKAPPRAARKTPG).

This sequence belongs to the eukaryotic RPC4/POLR3D RNA polymerase subunit family. As to quaternary structure, component of the RNA polymerase III complex consisting of 17 subunits: a ten-subunit horseshoe-shaped catalytic core composed of POLR3A/RPC1, POLR3B/RPC2, POLR1C/RPAC1, POLR1D/RPAC2, POLR3K/RPC10, POLR2E/RPABC1, POLR2F/RPABC2, POLR2H/RPABC3, POLR2K/RPABC4 and POLR2L/RPABC5; a mobile stalk composed of two subunits POLR3H/RPC8 and CRCP/RPC9, protruding from the core and functioning primarily in transcription initiation; and additional subunits homologous to general transcription factors of the RNA polymerase II machinery, POLR3C/RPC3-POLR3F/RPC6-POLR3G/RPC7 heterotrimer required for transcription initiation and POLR3D/RPC4-POLR3E/RPC5 heterodimer involved in both transcription initiation and termination. Post-translationally, sumoylation on Lys-141 can serve as a signal to mark misfolded Pol III for proteasomal degradation.

Its subcellular location is the nucleus. Its function is as follows. DNA-dependent RNA polymerase catalyzes the transcription of DNA into RNA using the four ribonucleoside triphosphates as substrates. Specific peripheric component of RNA polymerase III (Pol III) which synthesizes small non-coding RNAs including 5S rRNA, snRNAs, tRNAs and miRNAs from at least 500 distinct genomic loci. Enables recruitment of Pol III at transcription initiation site and drives transcription initiation from both type 2 and type 3 DNA promoters. Required for efficient transcription termination and reinitiation. Pol III plays a key role in sensing and limiting infection by intracellular bacteria and DNA viruses. Acts as nuclear and cytosolic DNA sensor involved in innate immune response. Can sense non-self dsDNA that serves as template for transcription into dsRNA. The non-self RNA polymerase III transcripts, such as Epstein-Barr virus-encoded RNAs (EBERs) induce type I interferon and NF-kappa-B through the RIG-I pathway. This is DNA-directed RNA polymerase III subunit RPC4 from Mus musculus (Mouse).